A 439-amino-acid polypeptide reads, in one-letter code: Prenyltransferase iacE (439 aa).

Residues 88 to 89, Glu97, Arg112, Lys198, Tyr200, Arg271, Lys273, and Tyr275 each bind substrate; that span reads WI.

The protein belongs to the tryptophan dimethylallyltransferase family.

It catalyses the reaction siccayne + dimethylallyl diphosphate = pestalodiol + diphosphate. Its pathway is secondary metabolite biosynthesis. In terms of biological role, prenyltransferase; part of the gene cluster that mediates the biosynthesis of iso-A82775C, a enylepoxycyclohexane and biosynthetic precursor of the chloropestolide anticancer natural products. Within the cluster, the prenyltransferase iacE prenylates siccayne to generate pestalodiol E, using dimethylallyl diphosphate (DMAPP) as cosubstrate. The probable oxidoreductase iacF is then involved in the epoxidation of pestalodiol F to pestalodiol F, which is further converted to pestalofone A by the short-chain dehydrogenase/reductase iacG. Iso-A82775C is subsequently generated from pestalofone A by the short-chain dehydrogenase/reductase iacC. Iso-A82775C is further condensed with maldoxin via a Diels-Alder reaction to produce the anticancer natural products chloropestolides A to E. The chain is Prenyltransferase iacE from Pestalotiopsis fici (strain W106-1 / CGMCC3.15140).